The sequence spans 422 residues: Histidine--tRNA ligase (422 aa).

The protein belongs to the class-II aminoacyl-tRNA synthetase family. As to quaternary structure, homodimer.

The protein localises to the cytoplasm. The catalysed reaction is tRNA(His) + L-histidine + ATP = L-histidyl-tRNA(His) + AMP + diphosphate + H(+). The protein is Histidine--tRNA ligase of Vibrio campbellii (strain ATCC BAA-1116).